The chain runs to 360 residues: Phospho-N-acetylmuramoyl-pentapeptide-transferase (360 aa).

10 helical membrane-spanning segments follow: residues 21–41 (YLTL…ILIG), 73–93 (TMGG…WADL), 97–117 (YVLV…VDDY), 134–154 (YFWQ…SATM), 168–188 (VFPQ…VGTS), 199–219 (GLAI…AYVT), 239–259 (LVIV…FNTY), 263–283 (VFMG…LAVL), 288–308 (LVLI…ILQV), and 338–358 (VIVR…ATLK).

This sequence belongs to the glycosyltransferase 4 family. MraY subfamily. The cofactor is Mg(2+).

The protein localises to the cell inner membrane. It catalyses the reaction UDP-N-acetyl-alpha-D-muramoyl-L-alanyl-gamma-D-glutamyl-meso-2,6-diaminopimeloyl-D-alanyl-D-alanine + di-trans,octa-cis-undecaprenyl phosphate = di-trans,octa-cis-undecaprenyl diphospho-N-acetyl-alpha-D-muramoyl-L-alanyl-D-glutamyl-meso-2,6-diaminopimeloyl-D-alanyl-D-alanine + UMP. It participates in cell wall biogenesis; peptidoglycan biosynthesis. Catalyzes the initial step of the lipid cycle reactions in the biosynthesis of the cell wall peptidoglycan: transfers peptidoglycan precursor phospho-MurNAc-pentapeptide from UDP-MurNAc-pentapeptide onto the lipid carrier undecaprenyl phosphate, yielding undecaprenyl-pyrophosphoryl-MurNAc-pentapeptide, known as lipid I. In Alteromonas mediterranea (strain DSM 17117 / CIP 110805 / LMG 28347 / Deep ecotype), this protein is Phospho-N-acetylmuramoyl-pentapeptide-transferase.